The chain runs to 486 residues: uncharacterized protein (486 aa).

It belongs to the UbiD family.

This is an uncharacterized protein from Aquifex aeolicus (strain VF5).